A 229-amino-acid polypeptide reads, in one-letter code: MTCCEGWTSCNGFSLLVLLLLGVVLNAIPLIVSLVEEDQFSQNPISCFEWWFPGIIGAGLMAIPATTMSLTARKRACCNNRTGMFLSSLFSVITVIGALYCMLISIQALLKGPLMCNSPSNSNANCEFSLKNISDIHPESFNLQWFFNDSCAPPTGFNKPTSNDTMASGWRASSFHFDSEENKHRLIHFSVFLGLLLVGILEVLFGLSQIVIGFLGCLCGVSKRRSQIV.

The Lumenal segment spans residues 1–14 (MTCCEGWTSCNGFS). The chain crosses the membrane as a helical span at residues 15–35 (LLVLLLLGVVLNAIPLIVSLV). The Cytoplasmic segment spans residues 36-44 (EEDQFSQNP). A helical transmembrane segment spans residues 45 to 65 (ISCFEWWFPGIIGAGLMAIPA). At 66–83 (TTMSLTARKRACCNNRTG) the chain is on the lumenal side. The helical transmembrane segment at 84-104 (MFLSSLFSVITVIGALYCMLI) threads the bilayer. Topologically, residues 105-185 (SIQALLKGPL…HFDSEENKHR (81 aa)) are cytoplasmic. The chain crosses the membrane as a helical span at residues 186–206 (LIHFSVFLGLLLVGILEVLFG). The Lumenal portion of the chain corresponds to 207–229 (LSQIVIGFLGCLCGVSKRRSQIV).

The protein belongs to the L6 tetraspanin family. In terms of processing, glycosylated at Asn-132, Asn-148 and Asn-163 in presence of ceramide which inverts the orientation of TM4SF20 in membranes exposing these residues to the endoplasmic reticulum lumen. Post-translationally, cleaved by signal peptidase at Ser-14 but the peptide does not act as a signal peptide. Cleavage is inhibited by ceramide which inverts the orientation of TM4SF20 in membranes exposing the N-terminus to the cytosol and not to the endoplasmic reticulum lumen. As to expression, expressed in the brain, with high levels in the parietal lobe, hippocampus, pons, white matter and cerebellum.

The protein resides in the membrane. Its subcellular location is the endoplasmic reticulum membrane. In terms of biological role, polytopic transmembrane protein that inhibits regulated intramembrane proteolysis (RIP) of CREB3L1, inhibiting its activation and the induction of collagen synthesis. In response to ceramide, which alters TM4SF20 membrane topology, stimulates RIP activation of CREB3L1. Ceramide reverses the direction through which transmembrane helices are translocated into the endoplasmic reticulum membrane during translation of TM4SF20, this mechanism is called 'regulated alternative translocation' (RAT) and regulates the function of the transmembrane protein. This is Transmembrane 4 L6 family member 20 (TM4SF20) from Homo sapiens (Human).